Consider the following 464-residue polypeptide: UDP-N-acetylmuramate--L-alanine ligase (464 aa).

118–124 contacts ATP; that stretch reads GTHGKTT.

It belongs to the MurCDEF family.

The protein localises to the cytoplasm. It catalyses the reaction UDP-N-acetyl-alpha-D-muramate + L-alanine + ATP = UDP-N-acetyl-alpha-D-muramoyl-L-alanine + ADP + phosphate + H(+). It participates in cell wall biogenesis; peptidoglycan biosynthesis. Its function is as follows. Cell wall formation. This Dinoroseobacter shibae (strain DSM 16493 / NCIMB 14021 / DFL 12) protein is UDP-N-acetylmuramate--L-alanine ligase.